The following is a 260-amino-acid chain: Triosephosphate isomerase (260 aa).

11 to 13 (NWK) is a binding site for substrate. H103 (electrophile) is an active-site residue. Catalysis depends on E175, which acts as the Proton acceptor. Residues G181, S220, and 241-242 (GG) each bind substrate.

This sequence belongs to the triosephosphate isomerase family. As to quaternary structure, homodimer.

The protein resides in the cytoplasm. It carries out the reaction D-glyceraldehyde 3-phosphate = dihydroxyacetone phosphate. It participates in carbohydrate biosynthesis; gluconeogenesis. It functions in the pathway carbohydrate degradation; glycolysis; D-glyceraldehyde 3-phosphate from glycerone phosphate: step 1/1. In terms of biological role, involved in the gluconeogenesis. Catalyzes stereospecifically the conversion of dihydroxyacetone phosphate (DHAP) to D-glyceraldehyde-3-phosphate (G3P). This Shewanella loihica (strain ATCC BAA-1088 / PV-4) protein is Triosephosphate isomerase.